The chain runs to 475 residues: L-seryl-tRNA(Sec) selenium transferase (475 aa).

Lysine 295 bears the N6-(pyridoxal phosphate)lysine mark.

The protein belongs to the SelA family. Pyridoxal 5'-phosphate serves as cofactor.

The protein localises to the cytoplasm. The enzyme catalyses L-seryl-tRNA(Sec) + selenophosphate + H(+) = L-selenocysteinyl-tRNA(Sec) + phosphate. It functions in the pathway aminoacyl-tRNA biosynthesis; selenocysteinyl-tRNA(Sec) biosynthesis; selenocysteinyl-tRNA(Sec) from L-seryl-tRNA(Sec) (bacterial route): step 1/1. In terms of biological role, converts seryl-tRNA(Sec) to selenocysteinyl-tRNA(Sec) required for selenoprotein biosynthesis. This chain is L-seryl-tRNA(Sec) selenium transferase, found in Desulfovibrio desulfuricans (strain ATCC 27774 / DSM 6949 / MB).